We begin with the raw amino-acid sequence, 548 residues long: Membrane protein insertase YidC (548 aa).

A helical transmembrane segment spans residues Asn6–Asp26. The segment at Asn28–Gly56 is disordered. Positions Pro29–Thr42 are enriched in low complexity. The next 4 membrane-spanning stretches (helical) occupy residues Phe350–Tyr370, Phe424–Ile444, Leu458–Ile478, and Pro499–Val519.

Belongs to the OXA1/ALB3/YidC family. Type 1 subfamily. In terms of assembly, interacts with the Sec translocase complex via SecD. Specifically interacts with transmembrane segments of nascent integral membrane proteins during membrane integration.

It is found in the cell inner membrane. Required for the insertion and/or proper folding and/or complex formation of integral membrane proteins into the membrane. Involved in integration of membrane proteins that insert both dependently and independently of the Sec translocase complex, as well as at least some lipoproteins. Aids folding of multispanning membrane proteins. This is Membrane protein insertase YidC from Salmonella agona (strain SL483).